A 220-amino-acid polypeptide reads, in one-letter code: Thioredoxin domain-containing protein (220 aa).

The first 19 residues, methionine 1–alanine 19, serve as a signal peptide directing secretion. The Thioredoxin domain occupies threonine 20–asparagine 141. Residues threonine 20–threonine 181 lie on the Lumenal side of the membrane. Cysteine 64 and cysteine 67 are disulfide-bonded. The chain crosses the membrane as a helical span at residues isoleucine 182–phenylalanine 202. Residues threonine 203 to lysine 220 are Cytoplasmic-facing. A Di-lysine motif motif is present at residues lysine 217–lysine 220.

This sequence belongs to the protein disulfide isomerase family.

The protein localises to the endoplasmic reticulum membrane. This Theileria parva (East coast fever infection agent) protein is Thioredoxin domain-containing protein.